A 964-amino-acid polypeptide reads, in one-letter code: Protein translocase subunit SecA (964 aa).

Residues glutamine 86, 104–108, and aspartate 494 each bind ATP; that span reads GEGKT. The interval 848–964 is disordered; it reads AESADTIAVA…YKMCHGQNEK (117 aa). Over residues 871–882 the composition is skewed to acidic residues; it reads AEGEVEEEDEDT. The span at 889 to 900 shows a compositional bias: low complexity; it reads AESAAASGAGES. The Zn(2+) site is built by cysteine 947, cysteine 949, cysteine 958, and histidine 959.

It belongs to the SecA family. Monomer and homodimer. Part of the essential Sec protein translocation apparatus which comprises SecA, SecYEG and auxiliary proteins SecDF. Other proteins may also be involved. Requires Zn(2+) as cofactor.

It localises to the cell membrane. It is found in the cytoplasm. It catalyses the reaction ATP + H2O + cellular proteinSide 1 = ADP + phosphate + cellular proteinSide 2.. In terms of biological role, part of the Sec protein translocase complex. Interacts with the SecYEG preprotein conducting channel. Has a central role in coupling the hydrolysis of ATP to the transfer of proteins into and across the cell membrane, serving as an ATP-driven molecular motor driving the stepwise translocation of polypeptide chains across the membrane. The protein is Protein translocase subunit SecA of Bifidobacterium longum (strain DJO10A).